A 435-amino-acid chain; its full sequence is Serine/threonine-protein kinase 40 (435 aa).

Residues 35–332 (FILGPRLGNS…EELDSLSSII (298 aa)) form the Protein kinase domain. ATP-binding positions include 41–49 (LGNSPVPSI) and Lys66. Asp197 functions as the Proton acceptor in the catalytic mechanism.

Belongs to the protein kinase superfamily. CAMK Ser/Thr protein kinase family.

The protein localises to the nucleus. The protein resides in the cytoplasm. It catalyses the reaction L-seryl-[protein] + ATP = O-phospho-L-seryl-[protein] + ADP + H(+). It carries out the reaction L-threonyl-[protein] + ATP = O-phospho-L-threonyl-[protein] + ADP + H(+). Functionally, may be a negative regulator of NF-kappa-B and p53-mediated gene transcription. The sequence is that of Serine/threonine-protein kinase 40 (STK40) from Gallus gallus (Chicken).